Here is a 388-residue protein sequence, read N- to C-terminus: Flavin oxidoreductase hxnT (388 aa).

This sequence belongs to the NADH:flavin oxidoreductase/NADH oxidase family. FMN serves as cofactor.

Functionally, flavin oxidoreductase, part of the hnx cluster involved in the purine degradation. The nicotinate hydroxylase hnxS accepts nicotinate as a substrate and catalyzes the first step of nicotinate catabolism. The major facilitator-type transporters hxnP and hxnZ are probably involved in the uptake of nicotinate-derived metabolites, and the oxidoreductases hxnT and hxnY in the further metabolism of 6-OH nicotinic acid. The protein is Flavin oxidoreductase hxnT of Emericella nidulans (strain FGSC A4 / ATCC 38163 / CBS 112.46 / NRRL 194 / M139) (Aspergillus nidulans).